Here is a 576-residue protein sequence, read N- to C-terminus: Epsin-1 (576 aa).

A 1,2-diacyl-sn-glycero-3-phospho-(1D-myo-inositol-4,5-bisphosphate)-binding residues include R8, K11, R25, N30, R63, and H73. The region spanning N12–R144 is the ENTH domain. The tract at residues K149–E185 is disordered. The span at T157–S167 shows a compositional bias: low complexity. 3 UIM domains span residues E183 to P202, E208 to E227, and G233 to K252. Low complexity predominate over residues T265 to W296. A disordered region spans residues T265–F404. 8 repeat units span residues D274–W276, D294–W296, D306–W308, D319–W321, D332–W334, D349–W351, D367–W369, and D377–W379. The segment at D274–W379 is 8 X 3 AA repeats of [ED]-P-W. The span at G297–T314 shows a compositional bias: pro residues. A compositionally biased stretch (low complexity) spans D332–P368. Phosphoserine; by CDK1 is present on S382. A [DE]-X(1,2)-F-X-X-[FL]-X-X-X-R motif motif is present at residues D402–R411. S419, S420, S435, S447, and S454 each carry phosphoserine. The segment at L448–L576 is disordered. Pro residues predominate over residues S454 to R468. A phosphothreonine mark is found at T460, T464, and T470. S473 is modified (phosphoserine). T494 carries the phosphothreonine modification. Tandem repeats lie at residues N502–F504 and N518–F520. A 3 X 3 AA repeats of N-P-F region spans residues N502 to F574. R534 carries the post-translational modification Omega-N-methylarginine. The segment covering G557–N570 has biased composition (pro residues). The stretch at N572–F574 is repeat 3.

Belongs to the epsin family. In terms of assembly, monomer. Binds clathrin, ZBTB16/ZNF145 and ITSN1. Binds ubiquitinated proteins. Binds AP2A1 and AP2A2. Interacts with RALBP1 in a complex also containing NUMB and TFAP2A during interphase and mitosis. Interacts with AP2B1. Interacts with UBQLN2. Interacts with REPS2; the interaction is direct. Interacts with EPS15; the interaction is direct. Interacts with ENTREP1. Post-translationally, phosphorylated on serine and/or threonine residues in mitotic cells. Phosphorylation reduces interaction with REPS2, AP-2 and the membrane fraction. Depolarization of synaptosomes results in dephosphorylation. In terms of processing, ubiquitinated.

It is found in the cytoplasm. The protein localises to the cell membrane. Its subcellular location is the nucleus. The protein resides in the membrane. It localises to the clathrin-coated pit. Binds to membranes enriched in phosphatidylinositol 4,5-bisphosphate (PtdIns(4,5)P2). Modifies membrane curvature and facilitates the formation of clathrin-coated invaginations. Regulates receptor-mediated endocytosis. The protein is Epsin-1 (EPN1) of Homo sapiens (Human).